The sequence spans 471 residues: Cysteine--tRNA ligase (471 aa).

Cys30 contributes to the Zn(2+) binding site. The short motif at 32–42 (PTVYNFAHIGN) is the 'HIGH' region element. Residues Cys212, His237, and Glu241 each coordinate Zn(2+). Positions 270–274 (KMSKS) match the 'KMSKS' region motif. Position 273 (Lys273) interacts with ATP.

This sequence belongs to the class-I aminoacyl-tRNA synthetase family. Monomer. It depends on Zn(2+) as a cofactor.

It is found in the cytoplasm. It carries out the reaction tRNA(Cys) + L-cysteine + ATP = L-cysteinyl-tRNA(Cys) + AMP + diphosphate. In Leptospira interrogans serogroup Icterohaemorrhagiae serovar copenhageni (strain Fiocruz L1-130), this protein is Cysteine--tRNA ligase.